Consider the following 196-residue polypeptide: Peptide deformylase (196 aa).

Positions 105 and 147 each coordinate Fe cation. Residue Glu-148 is part of the active site. His-151 is a binding site for Fe cation.

This sequence belongs to the polypeptide deformylase family. Requires Fe(2+) as cofactor.

It carries out the reaction N-terminal N-formyl-L-methionyl-[peptide] + H2O = N-terminal L-methionyl-[peptide] + formate. Its function is as follows. Removes the formyl group from the N-terminal Met of newly synthesized proteins. Requires at least a dipeptide for an efficient rate of reaction. N-terminal L-methionine is a prerequisite for activity but the enzyme has broad specificity at other positions. In Flavobacterium johnsoniae (strain ATCC 17061 / DSM 2064 / JCM 8514 / BCRC 14874 / CCUG 350202 / NBRC 14942 / NCIMB 11054 / UW101) (Cytophaga johnsonae), this protein is Peptide deformylase.